The sequence spans 530 residues: Light-independent protochlorophyllide reductase subunit B (530 aa).

[4Fe-4S] cluster is bound at residue D36. D287 serves as the catalytic Proton donor. 422–423 (GL) is a substrate binding site. A disordered region spans residues 453–472 (PAVQTASSEPQPSAIETPSA). Residues 454-463 (AVQTASSEPQ) are compositionally biased toward polar residues.

This sequence belongs to the ChlB/BchB/BchZ family. In terms of assembly, protochlorophyllide reductase is composed of three subunits; BchL, BchN and BchB. Forms a heterotetramer of two BchB and two BchN subunits. It depends on [4Fe-4S] cluster as a cofactor.

It catalyses the reaction chlorophyllide a + oxidized 2[4Fe-4S]-[ferredoxin] + 2 ADP + 2 phosphate = protochlorophyllide a + reduced 2[4Fe-4S]-[ferredoxin] + 2 ATP + 2 H2O. It participates in porphyrin-containing compound metabolism; bacteriochlorophyll biosynthesis (light-independent). Functionally, component of the dark-operative protochlorophyllide reductase (DPOR) that uses Mg-ATP and reduced ferredoxin to reduce ring D of protochlorophyllide (Pchlide) to form chlorophyllide a (Chlide). This reaction is light-independent. The NB-protein (BchN-BchB) is the catalytic component of the complex. The polypeptide is Light-independent protochlorophyllide reductase subunit B (Rhodopseudomonas palustris (strain BisB18)).